We begin with the raw amino-acid sequence, 500 residues long: NAD(P)H-quinone oxidoreductase chain 4, chloroplastic (500 aa).

Helical transmembrane passes span 3-23 (FFPWLTIIVVLPIFAGSVIFF), 37-57 (ICICILELLLTTYAFCYHFQF), 84-104 (GLSIGPILLTGFITTLATLAA), 111-129 (SRLFHFLMLAMYSGQIGSF), 134-154 (LLLFFIMWEFELIPVYLLLSI), 167-187 (FILYTAGGSIFLLMGVLGVGL), 208-228 (ALEIIFYIGFFIAFAVKSPII), 242-262 (HYSTCMLLAGILLKMGAYGLI), 272-292 (AHSIFSPWLVIVGTIQIIYAA), 305-325 (IAYSSVSHMGFILIGIGSITD), 330-350 (GAILQIISHGFIGAALFFLAG), 386-406 (LALPGMSGFVAELIVFFGIIT), 416-436 (ILITFVMAIGMILTPIYSLSM), and 462-482 (LFVSISIFLPVIGIGMYPDFV).

Belongs to the complex I subunit 4 family.

Its subcellular location is the plastid. The protein resides in the chloroplast thylakoid membrane. The enzyme catalyses a plastoquinone + NADH + (n+1) H(+)(in) = a plastoquinol + NAD(+) + n H(+)(out). It catalyses the reaction a plastoquinone + NADPH + (n+1) H(+)(in) = a plastoquinol + NADP(+) + n H(+)(out). This is NAD(P)H-quinone oxidoreductase chain 4, chloroplastic from Panax ginseng (Korean ginseng).